The sequence spans 305 residues: Endonuclease 1 (305 aa).

Positions 1-28 (MASAFRSSTRLILVLGILILCSVSSVRS) are cleaved as a signal peptide. Positions 29 and 34 each coordinate a divalent metal cation. 29 to 34 (WSKEGH) is a binding site for substrate. Cysteine 38 and cysteine 69 are oxidised to a cystine. A divalent metal cation contacts are provided by aspartate 73 and histidine 88. Residues 73-79 (DQIRHWY), 88-91 (HYID), and 98-103 (SYEYSR) contribute to the substrate site. 3 cysteine pairs are disulfide-bonded: cysteine 97–cysteine 249, cysteine 105–cysteine 115, and cysteine 230–cysteine 236. The substrate site is built by asparagine 122 and tyrosine 139. Asparagine 122 carries an N-linked (GlcNAc...) asparagine glycan. Residue asparagine 140 is glycosylated (N-linked (GlcNAc...) asparagine). 5 residues coordinate a divalent metal cation: histidine 150, aspartate 154, histidine 160, histidine 184, and aspartate 188. The segment at 150–199 (HFMGDIHQPMHVGFTSDEGGNTIDLRWYKHKSNLHHVWDREIILTALKEN) is substrate binding. Asparagine 214 is a glycosylation site (N-linked (GlcNAc...) asparagine). Positions 287–305 (MILNRVFSDDHAIAGVAAT) are cleaved as a propeptide — removed in mature form.

The protein belongs to the nuclease type I family. Monomer. Mn(2+) is required as a cofactor. The cofactor is Ca(2+). Mostly expressed in flowers and during leaf and stem senescence, and, to a lower extent, detectable at low levels in roots, leaves, and stems. Particularly expressed in senescing tissues in a NAC92/ORE1-dependent manner.

The enzyme catalyses Endonucleolytic cleavage to 5'-phosphomononucleotide and 5'-phosphooligonucleotide end-products.. Functionally, endonuclease that can use RNA, single-stranded and double-stranded DNA as substrates. Hydrolyzes single-stranded DNA and RNA without apparent specificity for bases during senescence. Endonuclease that recognizes and cleaves all types of mismatches with high efficiency, including heteroduplex double-stranded DNA. Maybe involved in programmed cell death (PCD) and senescence. The chain is Endonuclease 1 from Arabidopsis thaliana (Mouse-ear cress).